A 593-amino-acid polypeptide reads, in one-letter code: Zinc metalloproteinase-disintegrin-like atrase-B (593 aa).

A signal peptide spans 1–20 (MIQALLVIICLAVFPHQGSS). The propeptide occupies 21–191 (IILESGNVND…DESIEKTSQL (171 aa)). A Peptidase M12B domain is found at 205 to 400 (KYIEFYVIVD…DRPQCILNKP (196 aa)). Ca(2+) contacts are provided by Glu208 and Asp292. 3 cysteine pairs are disulfide-bonded: Cys316-Cys395, Cys356-Cys379, and Cys358-Cys363. Asn319 is a glycosylation site (N-linked (GlcNAc...) asparagine). Position 341 (His341) interacts with Zn(2+). Glu342 is an active-site residue. Zn(2+) contacts are provided by His345 and His351. Residues Cys395, Asn398, Ile410, Asn413, Phe415, Glu417, Glu420, and Asp423 each contribute to the Ca(2+) site. Residues 408 to 477 (PPICGNYFVE…ECPTDSLQRN (70 aa)) form the Disintegrin domain. 11 disulfides stabilise this stretch: Cys422–Cys435, Cys424–Cys430, Cys434–Cys440, Cys449–Cys469, Cys456–Cys488, Cys481–Cys493, Cys500–Cys550, Cys515–Cys558, Cys528–Cys538, Cys545–Cys581, and Cys575–Cys586. The D/ECD-tripeptide motif lies at 455–457 (DCD). Positions 457, 458, 460, and 472 each coordinate Ca(2+). Asn490 is a glycosylation site (N-linked (GlcNAc...) asparagine).

It belongs to the venom metalloproteinase (M12B) family. P-III subfamily. P-IIIa sub-subfamily. In terms of assembly, monomer. Requires Zn(2+) as cofactor. In terms of tissue distribution, expressed by the venom gland.

Its subcellular location is the secreted. With respect to regulation, inhibited by EDTA, EGTA, 1,10-phenanthroline and DTT. Not inhibited by PMSF and SBTI. In terms of biological role, snake venom zinc protease that inhibits the classical and alternative pathways of complement by cleaving factor B, C6, C7, and C8. Also slowly and selectively degrades alpha-chain of fibrinogen (FGA), and shows edema-inducing activity. This chain is Zinc metalloproteinase-disintegrin-like atrase-B, found in Naja atra (Chinese cobra).